Here is a 472-residue protein sequence, read N- to C-terminus: Methanethiol oxidase (472 aa).

A2 bears the N-acetylalanine mark. S467 carries the phosphoserine modification.

Belongs to the selenium-binding protein family. As to quaternary structure, interacts with USP33. Post-translationally, the N-terminus is blocked.

Its subcellular location is the nucleus. It is found in the cytoplasm. The protein resides in the cytosol. The protein localises to the membrane. It carries out the reaction methanethiol + O2 + H2O = hydrogen sulfide + formaldehyde + H2O2 + H(+). It functions in the pathway organosulfur degradation. Its function is as follows. Catalyzes the oxidation of methanethiol, an organosulfur compound known to be produced in substantial amounts by gut bacteria. Selenium-binding protein which may be involved in the sensing of reactive xenobiotics in the cytoplasm. May be involved in intra-Golgi protein transport. This Bos taurus (Bovine) protein is Methanethiol oxidase (SELENBP1).